The sequence spans 289 residues: Glucosamine-6-phosphate deaminase 1 (289 aa).

Lys-64 carries the N6-acetyllysine modification. The active-site Proton acceptor; for enolization step is the Asp-72. Residue Asp-141 is the For ring-opening step of the active site. Residue His-143 is the Proton acceptor; for ring-opening step of the active site. Glu-148 serves as the catalytic For ring-opening step. A Phosphothreonine modification is found at Thr-161.

It belongs to the glucosamine/galactosamine-6-phosphate isomerase family. In terms of assembly, homohexamer.

Its subcellular location is the cytoplasm. It catalyses the reaction alpha-D-glucosamine 6-phosphate + H2O = beta-D-fructose 6-phosphate + NH4(+). The protein operates within nucleotide-sugar biosynthesis; UDP-N-acetyl-alpha-D-glucosamine biosynthesis; alpha-D-glucosamine 6-phosphate from D-fructose 6-phosphate: step 1/1. Its activity is regulated as follows. Allosterically activated by N-acetylglucosamine-6-phosphate (GlcNAc6P). Its function is as follows. Catalyzes the reversible conversion of alpha-D-glucosamine 6-phosphate (GlcN-6P) into beta-D-fructose 6-phosphate (Fru-6P) and ammonium ion, a regulatory reaction step in de novo uridine diphosphate-N-acetyl-alpha-D-glucosamine (UDP-GlcNAc) biosynthesis via hexosamine pathway. Deamination is coupled to aldo-keto isomerization mediating the metabolic flux from UDP-GlcNAc toward Fru-6P. At high ammonium level can drive amination and isomerization of Fru-6P toward hexosamines and UDP-GlcNAc synthesis. Has a role in fine tuning the metabolic fluctuations of cytosolic UDP-GlcNAc and their effects on hyaluronan synthesis that occur during tissue remodeling. Seems to trigger calcium oscillations in mammalian eggs. These oscillations serve as the essential trigger for egg activation and early development of the embryo. In Pongo abelii (Sumatran orangutan), this protein is Glucosamine-6-phosphate deaminase 1.